We begin with the raw amino-acid sequence, 938 residues long: Isoleucine--tRNA ligase (938 aa).

The 'HIGH' region signature appears at 58-68 (PYANGSIHIGH). Glu-561 serves as a coordination point for L-isoleucyl-5'-AMP. Residues 602–606 (KMSKS) carry the 'KMSKS' region motif. Residue Lys-605 participates in ATP binding. Zn(2+) is bound by residues Cys-901, Cys-904, Cys-921, and Cys-924.

Belongs to the class-I aminoacyl-tRNA synthetase family. IleS type 1 subfamily. Monomer. Zn(2+) is required as a cofactor.

Its subcellular location is the cytoplasm. The enzyme catalyses tRNA(Ile) + L-isoleucine + ATP = L-isoleucyl-tRNA(Ile) + AMP + diphosphate. Catalyzes the attachment of isoleucine to tRNA(Ile). As IleRS can inadvertently accommodate and process structurally similar amino acids such as valine, to avoid such errors it has two additional distinct tRNA(Ile)-dependent editing activities. One activity is designated as 'pretransfer' editing and involves the hydrolysis of activated Val-AMP. The other activity is designated 'posttransfer' editing and involves deacylation of mischarged Val-tRNA(Ile). This Cronobacter sakazakii (strain ATCC BAA-894) (Enterobacter sakazakii) protein is Isoleucine--tRNA ligase.